Reading from the N-terminus, the 174-residue chain is NAD(P)H-quinone oxidoreductase subunit J, chloroplastic (174 aa).

The protein belongs to the complex I 30 kDa subunit family. In terms of assembly, NDH is composed of at least 16 different subunits, 5 of which are encoded in the nucleus.

It localises to the plastid. Its subcellular location is the chloroplast thylakoid membrane. The enzyme catalyses a plastoquinone + NADH + (n+1) H(+)(in) = a plastoquinol + NAD(+) + n H(+)(out). The catalysed reaction is a plastoquinone + NADPH + (n+1) H(+)(in) = a plastoquinol + NADP(+) + n H(+)(out). In terms of biological role, NDH shuttles electrons from NAD(P)H:plastoquinone, via FMN and iron-sulfur (Fe-S) centers, to quinones in the photosynthetic chain and possibly in a chloroplast respiratory chain. The immediate electron acceptor for the enzyme in this species is believed to be plastoquinone. Couples the redox reaction to proton translocation, and thus conserves the redox energy in a proton gradient. The chain is NAD(P)H-quinone oxidoreductase subunit J, chloroplastic from Mesostigma viride (Green alga).